The sequence spans 71 residues: Large ribosomal subunit protein bL31 (71 aa).

Residues cysteine 16, cysteine 18, cysteine 37, and cysteine 40 each contribute to the Zn(2+) site.

The protein belongs to the bacterial ribosomal protein bL31 family. Type A subfamily. In terms of assembly, part of the 50S ribosomal subunit. The cofactor is Zn(2+).

Its function is as follows. Binds the 23S rRNA. In Actinobacillus succinogenes (strain ATCC 55618 / DSM 22257 / CCUG 43843 / 130Z), this protein is Large ribosomal subunit protein bL31.